The primary structure comprises 380 residues: Probable protein phosphatase 2C 63 (380 aa).

Residues 35-338 (DYSIAVVQAN…DDISVIVVYL (304 aa)) enclose the PPM-type phosphatase domain. Residues aspartate 66, glycine 67, aspartate 270, and aspartate 329 each contribute to the Mn(2+) site.

The protein belongs to the PP2C family. Mg(2+) is required as a cofactor. Requires Mn(2+) as cofactor.

The enzyme catalyses O-phospho-L-seryl-[protein] + H2O = L-seryl-[protein] + phosphate. It carries out the reaction O-phospho-L-threonyl-[protein] + H2O = L-threonyl-[protein] + phosphate. In terms of biological role, may dephosphorylate and repress plasma membrane H(+)-ATPases (PM H(+)-ATPases, e.g. AHA1 and AHA2), thus influencing negatively plant growth and fitness. The chain is Probable protein phosphatase 2C 63 from Arabidopsis thaliana (Mouse-ear cress).